The following is a 408-amino-acid chain: CinA-like protein (408 aa).

It belongs to the CinA family.

The sequence is that of CinA-like protein from Thermotoga sp. (strain RQ2).